Reading from the N-terminus, the 231-residue chain is Large ribosomal subunit protein uL1 (231 aa).

It belongs to the universal ribosomal protein uL1 family. Part of the 50S ribosomal subunit.

Its function is as follows. Binds directly to 23S rRNA. The L1 stalk is quite mobile in the ribosome, and is involved in E site tRNA release. In terms of biological role, protein L1 is also a translational repressor protein, it controls the translation of the L11 operon by binding to its mRNA. This is Large ribosomal subunit protein uL1 from Polaromonas naphthalenivorans (strain CJ2).